We begin with the raw amino-acid sequence, 719 residues long: MLAPAAPAKDVVSADEKEEIIAKRKFRMKNVDAMRMSSLANDRMAFNKKCNALAMKFVKSAGIGTDALQLTCFQELVRHFNPIAAVVVGVKREPNSNVQAEKKTIPKVKTIQTPTQSMESVRLLQEKKASATEEQSAESASIMKHFANTIPNSTPTQSVKDVLTAAASKGQFKSSAEIFSHFPSEPSPSKPRATREGSQPSDYTYCTYLTPCILCEKALLMRESIAMTDNEAVKVLMAAVMSGHFRMATAEKAIRHERLRMCYDHVDFVYEMMCDAFEAKTESEINEMPPDRLMRGHDIYRALKRVGDLHKGKVTSNTPLYSFKNSIKSYYRNHVPRMVNGSLSKPSPKPFSELVALLQSVPPSTNLNELLNHNLSLSDADKQELIQLINGKDNRFTSRRRKIEDILDNKFAAAAAKAYRDHSEDAPSEPYIPNQSEMQNTVERRKRKLHSPEQDDAGSSSISWNAKKTKTPIDYVHLATRVLEGHSIADEALLHKSKVSYARNAFGEKPSSPTPPSAPLKFCVVNGKKYLRFENGTGPPKVVVQGNVVLRTNTLKDALTTAPRAQNQPSTSTDSSSSSEMEGIRQSFGAPQKEEEEEELVPTLLQNKPTHVESSSPVEKKPPTKTNVEKPAVRLGRMLTTAFGSMSYRTRKSVENKTDLLNQPTSASPRRMIKVVRNRNPHLAKQVAAAPSEPKHIPPTHMEKKPEELLMDPKPEPIF.

Disordered regions lie at residues 179–199 (FSHF…EGSQ), 419–464 (YRDH…SISW), 559–626 (LTTA…PTKT), and 684–719 (AKQV…EPIF). Over residues 570-579 (STSTDSSSSS) the composition is skewed to low complexity. The segment covering 604–617 (LLQNKPTHVESSSP) has biased composition (polar residues). Positions 693–719 (EPKHIPPTHMEKKPEELLMDPKPEPIF) are enriched in basic and acidic residues.

It localises to the nucleus. Its function is as follows. Synthetic multivulva (synMuv) class A protein. SynMuv proteins are required to repress the induction of vulval development. Acts redundantly with SynMuv class B protein lin-15B, and lin-35 to negatively regulate vulval development, most likely through antagonization of the Ras-signaling pathway. May also negatively regulate vulval development in association with other SynMuv class B proteins such as dpl-1 and efl-1. Regulates let-23 basal activity. Required for the correct expression and/or stability of lin-56. The polypeptide is Protein lin-15A (Caenorhabditis elegans).